A 982-amino-acid polypeptide reads, in one-letter code: Cell division cycle-associated protein 2 (982 aa).

A compositionally biased stretch (polar residues) spans 75 to 87 (VKTSSGKSTSSLQ). Residues 75–97 (VKTSSGKSTSSLQKARRRSTVGV) form a disordered region. A phosphoserine mark is found at Ser-100, Ser-122, and Ser-133. Disordered regions lie at residues 192–216 (SGFPVNSSSKRRRISSQDSPDNYLS) and 274–315 (TPLS…CGSS). 2 stretches are compositionally biased toward polar residues: residues 207–216 (SQDSPDNYLS) and 275–315 (PLSS…CGSS). Phosphoserine is present on residues Ser-286, Ser-296, and Ser-306. Thr-309 carries the phosphothreonine modification. The PP1-binding domain maps to 379–436 (KRKRVTFGEDLSPEVFDESLPANTPLCKGGTPVRPRTVKTTSPLQSPVHEQFLQPNFD). 2 positions are modified to phosphoserine: Ser-390 and Ser-397. 4 disordered regions span residues 400–473 (ANTP…NTCS), 489–545 (TRTS…KSYR), 568–638 (KPLL…QSQV), and 651–716 (ASER…PQSQ). The residue at position 402 (Thr-402) is a Phosphothreonine. Position 424 is a phosphoserine (Ser-424). 2 stretches are compositionally biased toward polar residues: residues 451–473 (SFANLSLSKSSLSETPPGTNTCS) and 498–512 (TLSSTGVCSSYTTQA). Positions 518-545 (KMSRRKSREKKHTSAALPKKKQVLKSYR) are enriched in basic residues. Phosphoserine is present on residues Ser-572 and Ser-595. Residues 651 to 668 (ASERGPNASTRDTGSEGN) show a composition bias toward polar residues. Over residues 669–685 (TRAESKCQSAKEPKPGT) the composition is skewed to basic and acidic residues. Ser-735 carries the phosphoserine modification. Residue Lys-741 forms a Glycyl lysine isopeptide (Lys-Gly) (interchain with G-Cter in SUMO2) linkage. The tract at residues 910–982 (ECPSSKEETI…SLKGESAQLP (73 aa)) is disordered. Ser-913 bears the Phosphoserine mark. The segment covering 931–942 (VSGSESQGVGSS) has biased composition (low complexity). Ser-950 is subject to Phosphoserine. Residues 952–964 (CGSTLTDANSATQ) are compositionally biased toward polar residues. A Phosphoserine modification is found at Ser-973.

As to quaternary structure, interacts with PPP1CC. Post-translationally, phosphorylated by CDK1. May regulate its subcellular location.

The protein resides in the nucleus. In terms of biological role, regulator of chromosome structure during mitosis required for condensin-depleted chromosomes to retain their compact architecture through anaphase. Acts by mediating the recruitment of phopsphatase PP1-gamma subunit (PPP1CC) to chromatin at anaphase and into the following interphase. At anaphase onset, its association with chromatin targets a pool of PPP1CC to dephosphorylate substrates. This Mus musculus (Mouse) protein is Cell division cycle-associated protein 2 (Cdca2).